Reading from the N-terminus, the 667-residue chain is tRNA uridine 5-carboxymethylaminomethyl modification enzyme MnmG (667 aa).

13–18 provides a ligand contact to FAD; sequence GGGHAG. 280–294 provides a ligand contact to NAD(+); that stretch reads GPRYCPSVEDKINRF.

It belongs to the MnmG family. In terms of assembly, homodimer. Heterotetramer of two MnmE and two MnmG subunits. FAD serves as cofactor.

It is found in the cytoplasm. Functionally, NAD-binding protein involved in the addition of a carboxymethylaminomethyl (cmnm) group at the wobble position (U34) of certain tRNAs, forming tRNA-cmnm(5)s(2)U34. The protein is tRNA uridine 5-carboxymethylaminomethyl modification enzyme MnmG of Polaromonas naphthalenivorans (strain CJ2).